We begin with the raw amino-acid sequence, 322 residues long: Retinal homeobox protein Rx-A (322 aa).

The short motif at 32–39 (HSIEAILG) is the Octapeptide motif element. Residues 75-87 (TEEIHPQQEHLED) are compositionally biased toward basic and acidic residues. The segment at 75 to 136 (TEEIHPQQEH…KKKHRRNRTT (62 aa)) is disordered. Over residues 100–117 (KTSSECLSPGLSTSNSDN) the composition is skewed to polar residues. A DNA-binding region (homeobox) is located at residues 130–189 (HRRNRTTFTTYQLHELERAFEKSHYPDVYSREELAMKVNLPEVRVQVWFQNRRAKWRRQE). The OAR motif lies at 302–315 (NSIASLRMKAKEHI). The Nuclear localization signal motif lies at 308–312 (RMKAK).

It belongs to the paired homeobox family. Bicoid subfamily. As to expression, highly expressed in anterior neural plate followed by neural retina, pigmented epithelium, in pineal gland, diencephalon floor and epiphysis. At later stages, the neuroretina remains the primary site of expression. No expression in the developing lens and cornea.

It is found in the nucleus. Plays a critical role in eye formation by regulating the initial specification of retinal cells and/or their subsequent proliferation. The sequence is that of Retinal homeobox protein Rx-A (rax-a) from Xenopus laevis (African clawed frog).